A 56-amino-acid chain; its full sequence is Large ribosomal subunit protein eL40 (56 aa).

The protein belongs to the eukaryotic ribosomal protein eL40 family.

The protein is Large ribosomal subunit protein eL40 of Sulfurisphaera tokodaii (strain DSM 16993 / JCM 10545 / NBRC 100140 / 7) (Sulfolobus tokodaii).